The following is a 479-amino-acid chain: UDP-N-acetylmuramate--L-alanine ligase (479 aa).

128–134 contacts ATP; sequence GAHGKTT.

This sequence belongs to the MurCDEF family.

The protein resides in the cytoplasm. The catalysed reaction is UDP-N-acetyl-alpha-D-muramate + L-alanine + ATP = UDP-N-acetyl-alpha-D-muramoyl-L-alanine + ADP + phosphate + H(+). It functions in the pathway cell wall biogenesis; peptidoglycan biosynthesis. Cell wall formation. The chain is UDP-N-acetylmuramate--L-alanine ligase from Psychrobacter arcticus (strain DSM 17307 / VKM B-2377 / 273-4).